The following is an 89-amino-acid chain: Small ribosomal subunit protein uS15 (89 aa).

The protein belongs to the universal ribosomal protein uS15 family. Part of the 30S ribosomal subunit. Forms a bridge to the 50S subunit in the 70S ribosome, contacting the 23S rRNA.

In terms of biological role, one of the primary rRNA binding proteins, it binds directly to 16S rRNA where it helps nucleate assembly of the platform of the 30S subunit by binding and bridging several RNA helices of the 16S rRNA. Its function is as follows. Forms an intersubunit bridge (bridge B4) with the 23S rRNA of the 50S subunit in the ribosome. This chain is Small ribosomal subunit protein uS15, found in Halalkalibacterium halodurans (strain ATCC BAA-125 / DSM 18197 / FERM 7344 / JCM 9153 / C-125) (Bacillus halodurans).